Reading from the N-terminus, the 436-residue chain is 3-ketoacyl-CoA thiolase (436 aa).

Cys-99 serves as the catalytic Acyl-thioester intermediate. Residues His-392 and Cys-422 each act as proton acceptor in the active site.

The protein belongs to the thiolase-like superfamily. Thiolase family. Heterotetramer of two alpha chains (FadJ) and two beta chains (FadI).

It is found in the cytoplasm. The catalysed reaction is an acyl-CoA + acetyl-CoA = a 3-oxoacyl-CoA + CoA. Its pathway is lipid metabolism; fatty acid beta-oxidation. In terms of biological role, catalyzes the final step of fatty acid oxidation in which acetyl-CoA is released and the CoA ester of a fatty acid two carbons shorter is formed. In Salmonella paratyphi C (strain RKS4594), this protein is 3-ketoacyl-CoA thiolase.